An 819-amino-acid polypeptide reads, in one-letter code: Ent-beyerene synthase KSL2, chloroplastic (819 aa).

Residues 1-58 (MLPCLFPAYGSVVACKPSAIDRSPFGLLSQPKQTNRTLIRRPKVTKAFMAIEAMRHCS) constitute a chloroplast transit peptide. The segment covering 58–76 (SSSSSSEEGGAAATTAARS) has biased composition (low complexity). A disordered region spans residues 58 to 77 (SSSSSSEEGGAAATTAARSA). 5 residues coordinate Mg(2+): aspartate 567, aspartate 571, asparagine 711, serine 715, and glutamate 719. A DDXXD motif motif is present at residues 567–571 (DDFFD).

Belongs to the terpene synthase family. The cofactor is Mg(2+). Expressed in roots. Highly expressed in stems, flowers and panicle.

Its subcellular location is the plastid. The protein resides in the chloroplast. The enzyme catalyses ent-copalyl diphosphate = ent-beyerene + diphosphate. It catalyses the reaction ent-copalyl diphosphate = ent-kaur-16-ene + diphosphate. It participates in secondary metabolite biosynthesis; terpenoid biosynthesis. In terms of biological role, diterpene cyclase involved in jasmonic acid-dependent defense mechanisms in roots by mediating the biosynthesis of labdane-related diterpenoids (LRDs) natural products such as ent-beyerene, an antimicrobial compound. Catalyzes the cyclization of ent-CDP into ent-beyerene as a major and ent-kaurene as a minor product. May be involved in the catalysis of an early step of the gibberellin (GA) biosynthesis pathway. This Oryza sativa subsp. japonica (Rice) protein is Ent-beyerene synthase KSL2, chloroplastic.